Consider the following 242-residue polypeptide: Probable transcriptional regulatory protein LSL_0422 (242 aa).

Positions 1–21 (MSGHSKWHNIQGRKNAQDAKR) are disordered.

This sequence belongs to the TACO1 family.

The protein resides in the cytoplasm. The chain is Probable transcriptional regulatory protein LSL_0422 from Ligilactobacillus salivarius (strain UCC118) (Lactobacillus salivarius).